Reading from the N-terminus, the 160-residue chain is Lipoprotein signal peptidase (160 aa).

Transmembrane regions (helical) follow at residues 60 to 80 (IEWL…AFFI) and 84 to 104 (LPFL…AGTV). Catalysis depends on residues aspartate 118 and aspartate 132. A helical transmembrane segment spans residues 128–148 (FNIADSCLTVGVIGLLLLYIV).

The protein belongs to the peptidase A8 family.

It localises to the cell membrane. It carries out the reaction Release of signal peptides from bacterial membrane prolipoproteins. Hydrolyzes -Xaa-Yaa-Zaa-|-(S,diacylglyceryl)Cys-, in which Xaa is hydrophobic (preferably Leu), and Yaa (Ala or Ser) and Zaa (Gly or Ala) have small, neutral side chains.. It participates in protein modification; lipoprotein biosynthesis (signal peptide cleavage). Its function is as follows. This protein specifically catalyzes the removal of signal peptides from prolipoproteins. This is Lipoprotein signal peptidase from Dehalococcoides mccartyi (strain CBDB1).